A 507-amino-acid polypeptide reads, in one-letter code: Putative thymidine phosphorylase (507 aa).

The protein belongs to the thymidine/pyrimidine-nucleoside phosphorylase family. Type 2 subfamily.

It carries out the reaction thymidine + phosphate = 2-deoxy-alpha-D-ribose 1-phosphate + thymine. This is Putative thymidine phosphorylase from Ralstonia nicotianae (strain ATCC BAA-1114 / GMI1000) (Ralstonia solanacearum).